Reading from the N-terminus, the 115-residue chain is Succinate dehydrogenase assembly factor 3, mitochondrial (115 aa).

The protein belongs to the complex I LYR family. SDHAF3 subfamily. In terms of assembly, interacts with sdh2 within an sdh1-sdh2 subcomplex.

The protein localises to the mitochondrion matrix. Functionally, plays an essential role in the assembly of succinate dehydrogenase (SDH), an enzyme complex (also referred to as respiratory complex II) that is a component of both the tricarboxylic acid (TCA) cycle and the mitochondrial electron transport chain, and which couples the oxidation of succinate to fumarate with the reduction of ubiquinone (coenzyme Q) to ubiquinol. Promotes maturation of the iron-sulfur protein subunit sdh2 of the SDH catalytic dimer, protecting it from the deleterious effects of oxidants. May act together with SDHAF1. In Schizosaccharomyces pombe (strain 972 / ATCC 24843) (Fission yeast), this protein is Succinate dehydrogenase assembly factor 3, mitochondrial.